The chain runs to 448 residues: Beta-glucosidase A (448 aa).

E166 (proton donor) is an active-site residue. The active-site Nucleophile is E352.

It belongs to the glycosyl hydrolase 1 family. In terms of assembly, homooctamer.

The catalysed reaction is Hydrolysis of terminal, non-reducing beta-D-glucosyl residues with release of beta-D-glucose.. Its function is as follows. BglA is intracellular and cleaves cellobiose probably through inorganic phosphate mediated hydrolysis. The protein is Beta-glucosidase A (bglA) of Paenibacillus polymyxa (Bacillus polymyxa).